The chain runs to 172 residues: Adenine phosphoribosyltransferase (172 aa).

Belongs to the purine/pyrimidine phosphoribosyltransferase family. In terms of assembly, homodimer.

It is found in the cytoplasm. The catalysed reaction is AMP + diphosphate = 5-phospho-alpha-D-ribose 1-diphosphate + adenine. Its pathway is purine metabolism; AMP biosynthesis via salvage pathway; AMP from adenine: step 1/1. In terms of biological role, catalyzes a salvage reaction resulting in the formation of AMP, that is energically less costly than de novo synthesis. The polypeptide is Adenine phosphoribosyltransferase (Roseiflexus castenholzii (strain DSM 13941 / HLO8)).